The following is a 314-amino-acid chain: Porphobilinogen deaminase (314 aa).

C242 carries the post-translational modification S-(dipyrrolylmethanemethyl)cysteine.

It belongs to the HMBS family. As to quaternary structure, monomer. Requires dipyrromethane as cofactor.

It carries out the reaction 4 porphobilinogen + H2O = hydroxymethylbilane + 4 NH4(+). Its pathway is porphyrin-containing compound metabolism; protoporphyrin-IX biosynthesis; coproporphyrinogen-III from 5-aminolevulinate: step 2/4. Functionally, tetrapolymerization of the monopyrrole PBG into the hydroxymethylbilane pre-uroporphyrinogen in several discrete steps. In Buchnera aphidicola subsp. Acyrthosiphon pisum (strain APS) (Acyrthosiphon pisum symbiotic bacterium), this protein is Porphobilinogen deaminase (hemC).